Consider the following 186-residue polypeptide: NADH-ubiquinone oxidoreductase 17.8 kDa subunit, mitochondrial (186 aa).

Residues 1-26 (MSSFRLGVSRVARQVRAPCVRNTRRY) constitute a mitochondrion transit peptide. Residues 22-49 (NTRRYASDSHAPADHTHSAAGHGEHHHA) are disordered. A compositionally biased stretch (basic and acidic residues) spans 26–49 (YASDSHAPADHTHSAAGHGEHHHA). The helical transmembrane segment at 58–78 (LGTAFYVIFGAIPAFGALYYF) threads the bilayer.

Complex I is composed of about 40 different subunits.

It localises to the mitochondrion inner membrane. The catalysed reaction is a ubiquinone + NADH + 5 H(+)(in) = a ubiquinol + NAD(+) + 4 H(+)(out). Its function is as follows. Transfer of electrons from NADH to the respiratory chain. The immediate electron acceptor for the enzyme is believed to be ubiquinone. The sequence is that of NADH-ubiquinone oxidoreductase 17.8 kDa subunit, mitochondrial (nuo17.8) from Neurospora crassa (strain ATCC 24698 / 74-OR23-1A / CBS 708.71 / DSM 1257 / FGSC 987).